Here is a 342-residue protein sequence, read N- to C-terminus: Glucan endo-1,3-beta-glucosidase (342 aa).

Positions M1 to Q26 are cleaved as a signal peptide. The active-site Proton donor is the E119. E261 acts as the Nucleophile in catalysis.

This sequence belongs to the glycosyl hydrolase 17 family. In terms of processing, the N-terminus is blocked.

It localises to the vacuole. The catalysed reaction is Hydrolysis of (1-&gt;3)-beta-D-glucosidic linkages in (1-&gt;3)-beta-D-glucans.. Is thought to be an important plant defense-related product against fungal pathogens. Accumulation of the glucanase can be detected as early as 4 hours after inoculation. This chain is Glucan endo-1,3-beta-glucosidase (BGL), found in Brassica campestris (Field mustard).